Reading from the N-terminus, the 347-residue chain is UDP-3-O-acylglucosamine N-acyltransferase (347 aa).

Catalysis depends on H245, which acts as the Proton acceptor.

This sequence belongs to the transferase hexapeptide repeat family. LpxD subfamily. In terms of assembly, homotrimer.

The enzyme catalyses a UDP-3-O-[(3R)-3-hydroxyacyl]-alpha-D-glucosamine + a (3R)-hydroxyacyl-[ACP] = a UDP-2-N,3-O-bis[(3R)-3-hydroxyacyl]-alpha-D-glucosamine + holo-[ACP] + H(+). Its pathway is bacterial outer membrane biogenesis; LPS lipid A biosynthesis. Functionally, catalyzes the N-acylation of UDP-3-O-acylglucosamine using 3-hydroxyacyl-ACP as the acyl donor. Is involved in the biosynthesis of lipid A, a phosphorylated glycolipid that anchors the lipopolysaccharide to the outer membrane of the cell. In Chromohalobacter salexigens (strain ATCC BAA-138 / DSM 3043 / CIP 106854 / NCIMB 13768 / 1H11), this protein is UDP-3-O-acylglucosamine N-acyltransferase.